The following is an 85-amino-acid chain: uncharacterized protein (85 aa).

A signal peptide spans 1–21 (MRPLLCALAGLALLCAVGALA). Residues 22–35 (DGREDRGSPGDTGE) show a composition bias toward basic and acidic residues. The tract at residues 22-85 (DGREDRGSPG…EVVHLPGSTL (64 aa)) is disordered. A compositionally biased stretch (low complexity) spans 36-51 (RPAGPARGPGLEPARG).

The protein localises to the secreted. This is an uncharacterized protein from Homo sapiens (Human).